The sequence spans 749 residues: 5-methyltetrahydropteroyltriglutamate--homocysteine methyltransferase (749 aa).

Residues R18–K21 and K112 contribute to the 5-methyltetrahydropteroyltri-L-glutamate site. L-homocysteine contacts are provided by residues I420–S422 and E473. Residues I420–S422 and E473 each bind L-methionine. Residue W550 participates in 5-methyltetrahydropteroyltri-L-glutamate binding. D588 is a binding site for L-homocysteine. D588 contacts L-methionine. E594 provides a ligand contact to 5-methyltetrahydropteroyltri-L-glutamate. 3 residues coordinate Zn(2+): H630, C632, and E654. The Proton donor role is filled by H683. C715 is a binding site for Zn(2+).

Belongs to the vitamin-B12 independent methionine synthase family. The cofactor is Zn(2+).

The catalysed reaction is 5-methyltetrahydropteroyltri-L-glutamate + L-homocysteine = tetrahydropteroyltri-L-glutamate + L-methionine. It participates in amino-acid biosynthesis; L-methionine biosynthesis via de novo pathway; L-methionine from L-homocysteine (MetE route): step 1/1. Its function is as follows. Catalyzes the transfer of a methyl group from 5-methyltetrahydrofolate to homocysteine resulting in methionine formation. The chain is 5-methyltetrahydropteroyltriglutamate--homocysteine methyltransferase from Staphylococcus haemolyticus (strain JCSC1435).